Consider the following 126-residue polypeptide: uncharacterized protein (126 aa).

Topologically, residues 1–28 (MAGEAVSEHTPDSQEVTVTSVVCCLDSV) are cytoplasmic. A helical membrane pass occupies residues 29-49 (VEIGHHVVYSVVTPLIVAVLI). Over 50–75 (DTMAGEAVLEHTSDSQEEIVTTVVCS) the chain is Extracellular. A helical transmembrane segment spans residues 76–96 (VVPLVCFVVSVVCFVISVVEI). Position 97 (Gly-97) is a topological domain, cytoplasmic. The chain crosses the membrane as a helical span at residues 98-118 (HHVVYSVVAPLTVTVAVETIA). Topologically, residues 119 to 126 (EEMDSVHT) are extracellular.

The protein localises to the membrane. This is an uncharacterized protein from Saccharomyces cerevisiae (strain ATCC 204508 / S288c) (Baker's yeast).